The following is a 292-amino-acid chain: Small ribosomal subunit protein uS2 (292 aa).

Residues 230–292 (RSGGAPGSEK…KKEAGSGEEA (63 aa)) are disordered. 2 stretches are compositionally biased toward basic and acidic residues: residues 247–259 (EWER…KTEA) and 271–292 (PAKE…GEEA).

It belongs to the universal ribosomal protein uS2 family.

The chain is Small ribosomal subunit protein uS2 from Thermobifida fusca (strain YX).